The primary structure comprises 458 residues: Sulfite efflux pump SSU1 (458 aa).

Over 1 to 11 the chain is Cytoplasmic; the sequence is MVANWVLALTR. The helical transmembrane segment at 12 to 32 threads the bilayer; the sequence is QFDPFMFMMVMGVGISSNILY. The Extracellular segment spans residues 33–48; that stretch reads SFPYPARWLRICSYIM. A helical transmembrane segment spans residues 49-69; the sequence is FAIACLIFIAVQALQILHLIV. Residues 70–89 are Cytoplasmic-facing; that stretch reads YIKEKSFREYFNDFFRNMKH. A helical transmembrane segment spans residues 90–110; the sequence is NLFWGTYPMGLVTIINFLGAL. The Extracellular segment spans residues 111–135; it reads SKANTTKSPTNARNLMIFVYVLWWY. A helical membrane pass occupies residues 136–156; it reads DLAVCLVIAWGISFLIWHDYY. At 157-176 the chain is on the cytoplasmic side; sequence PLEGIGNYPSYNIKMASENM. A helical membrane pass occupies residues 177–197; the sequence is KSVLLLDIIPLVVVASSCGTF. Topologically, residues 198-220 are extracellular; the sequence is TMSEIFFHAFNRNIQLITLVICA. A helical transmembrane segment spans residues 221–241; the sequence is LTWLHAIIFVFILIAIYFWSL. The Cytoplasmic portion of the chain corresponds to 242 to 252; that stretch reads YINKIPPMTQV. A helical transmembrane segment spans residues 253-275; the sequence is FTLFLLLGPMGQGSFGVLLLTDN. The Extracellular segment spans residues 276-309; sequence IKKYAGKYYPTDNITREQEILTIAVPWCFKILGM. Residues 310 to 330 form a helical membrane-spanning segment; it reads VSAMALLAMGYFFTVISVVSI. The Cytoplasmic segment spans residues 331–350; that stretch reads LSYYNKKEIENETGKVKRVY. A helical transmembrane segment spans residues 351–371; that stretch reads TFHKGFWGMTFPMGTMSLGNE. At 372–387 the chain is on the extracellular side; sequence ELYVQYNQYVPLYAFR. The chain crosses the membrane as a helical span at residues 388 to 408; it reads VLGTIYGGVCVCWSILCLLCT. Topologically, residues 409 to 458 are cytoplasmic; sequence LHEYSKKMLHAARKSSLFSESGTEKTTVSPYNSIESVEESNSALDFTRLA. Phosphoserine is present on residues Ser-444, Ser-448, and Ser-450.

This sequence belongs to the tellurite-resistance/dicarboxylate transporter (TDT) family.

The protein resides in the cell membrane. Involved in efflux of free sulfite. Mutations in the SSU1 gene cause sensitivity to sulfite. The protein is Sulfite efflux pump SSU1 (SSU1) of Saccharomyces cerevisiae (strain ATCC 204508 / S288c) (Baker's yeast).